The chain runs to 153 residues: Glutamyl-tRNA(Gln) amidotransferase subunit C, mitochondrial (153 aa).

The segment at 31-55 is disordered; it reads HPTKVPQQPEPNAFPDLDNNTDDDP.

This sequence belongs to the GatC family. As to quaternary structure, subunit of the heterotrimeric GatCAB amidotransferase (AdT) complex, composed of A, B and C subunits.

The protein resides in the mitochondrion. The catalysed reaction is L-glutamyl-tRNA(Gln) + L-glutamine + ATP + H2O = L-glutaminyl-tRNA(Gln) + L-glutamate + ADP + phosphate + H(+). Functionally, allows the formation of correctly charged Gln-tRNA(Gln) through the transamidation of misacylated Glu-tRNA(Gln) in the mitochondria. The reaction takes place in the presence of glutamine and ATP through an activated gamma-phospho-Glu-tRNA(Gln). The sequence is that of Glutamyl-tRNA(Gln) amidotransferase subunit C, mitochondrial from Drosophila willistoni (Fruit fly).